Here is a 269-residue protein sequence, read N- to C-terminus: 3-methyl-2-oxobutanoate hydroxymethyltransferase (269 aa).

Mg(2+) is bound by residues aspartate 46 and aspartate 85. Residues aspartate 46–serine 47, aspartate 85, and lysine 114 each bind 3-methyl-2-oxobutanoate. Mg(2+) is bound at residue glutamate 116. Catalysis depends on glutamate 183, which acts as the Proton acceptor.

It belongs to the PanB family. As to quaternary structure, homodecamer; pentamer of dimers. It depends on Mg(2+) as a cofactor.

It localises to the cytoplasm. The catalysed reaction is 3-methyl-2-oxobutanoate + (6R)-5,10-methylene-5,6,7,8-tetrahydrofolate + H2O = 2-dehydropantoate + (6S)-5,6,7,8-tetrahydrofolate. The protein operates within cofactor biosynthesis; (R)-pantothenate biosynthesis; (R)-pantoate from 3-methyl-2-oxobutanoate: step 1/2. In terms of biological role, catalyzes the reversible reaction in which hydroxymethyl group from 5,10-methylenetetrahydrofolate is transferred onto alpha-ketoisovalerate to form ketopantoate. In Methylococcus capsulatus (strain ATCC 33009 / NCIMB 11132 / Bath), this protein is 3-methyl-2-oxobutanoate hydroxymethyltransferase.